The chain runs to 111 residues: uncharacterized protein (111 aa).

The 108-residue stretch at 4–111 (IFERIIEGAV…LGGGLLGSIA (108 aa)) folds into the HIT domain. The Histidine triad motif motif lies at 96-100 (HLHIH).

This is an uncharacterized protein from Chlamydia trachomatis serovar D (strain ATCC VR-885 / DSM 19411 / UW-3/Cx).